A 473-amino-acid chain; its full sequence is FAD-dependent oxidoreductase dpasF (473 aa).

The N-terminal stretch at 1–21 is a signal peptide; the sequence is MNRLLASALLVGSAVVAPVSA. N-linked (GlcNAc...) asparagine glycans are attached at residues N26, N54, N92, N133, N185, N276, and N401.

This sequence belongs to the beta-cyclopiazonate dehydrogenase family. FAD serves as cofactor.

It participates in secondary metabolite biosynthesis; terpenoid biosynthesis. Its function is as follows. FAD-dependent oxidoreductase; part of the gene cluster that mediates the biosynthesis of the diterpenoid pyrones subglutinols A and B. The first step of the pathway is the synthesis of the alpha-pyrone moiety by the polyketide synthase dpasA via condensation of one acetyl-CoA starter unit with 3 malonyl-CoA units and 2 methylations. The alpha-pyrone is then combined with geranylgeranyl pyrophosphate (GGPP) formed by the GGPP synthase dpasD through the action of the prenyltransferase dpasC to yield a linear alpha-pyrone diterpenoid. Subsequent steps in the diterpenoid pyrone biosynthetic pathway involve the decalin core formation, which is initiated by the epoxidation of the C10-C11 olefin by the FAD-dependent oxidoreductase dpasE, and is followed by a cyclization cascade catalyzed by the terpene cyclase dpasB. The FAD-linked oxidoreductase dpasF is then involved in tetrahydrofuran (THF) ring formation at the C5 unit to complete the formation of subglutinols A and B. DpasF possesses also an additional catalytic ability of multi-step oxidations to generate a new DDP analog with an enone system at the C5 named FDDP A. This is FAD-dependent oxidoreductase dpasF from Apiospora sacchari (Arthrinium sacchari).